A 572-amino-acid chain; its full sequence is MATVSRRAYAEMFGPTVGDRVRLADTGLVAEVEQDFTLRAGGYGEEVKFGGGKTIRDGMAQSQRTRAEGAMDTVLTNALVIDHWGIVKADIGLKDGRVAAIGKAGNPDTQPGVDIVIGPGTEIISCEGNIVTAGGIDSHIHFICPQQIEEALASGITTMLGGGTGPATGTLATTCTPGPWHIERMLQAADAFPMNIGFLGKGNASLPAALHEQIEAGVIGLKLHEDWGTTPSAISNCMDVADATDTQVAIHSDTLNESGFVENTIAAVGGRGICAFHTEGAGGGHAPDILRVVGEDNFLPSSTNPTMPYTRNTLDEHVDMLMVCHHLDAAIAEDLAFAESRIRKETIAAEDILHDLGAISMMSSDSQAMGRVGEVILRTWQTADKMKQQRGALPEDGARNDNHRIKRYVAKYTINPAIAHGISHDVGSLEVGKWADIVVWKPAFFGVKPAMVLKGGSIAVAAMGDPNASIPTPQPVHYRPMFGAFGGSLARSSLTFVSQAAMAAGVRERFGLAKQLSAVRGIRGVRKQHMVHNGYTPRMEIDAQTYTVRADGQLLTCESATRLPLAQRYFLF.

In terms of domain architecture, Urease spans 134–572 (GGIDSHIHFI…LPLAQRYFLF (439 aa)). Residues H139, H141, and K222 each contribute to the Ni(2+) site. K222 carries the post-translational modification N6-carboxylysine. H224 is a substrate binding site. 2 residues coordinate Ni(2+): H251 and H277. H325 acts as the Proton donor in catalysis. A Ni(2+)-binding site is contributed by D365.

The protein belongs to the metallo-dependent hydrolases superfamily. Urease alpha subunit family. As to quaternary structure, heterotrimer of UreA (gamma), UreB (beta) and UreC (alpha) subunits. Three heterotrimers associate to form the active enzyme. Requires Ni cation as cofactor. Carboxylation allows a single lysine to coordinate two nickel ions.

The protein resides in the cytoplasm. The catalysed reaction is urea + 2 H2O + H(+) = hydrogencarbonate + 2 NH4(+). It functions in the pathway nitrogen metabolism; urea degradation; CO(2) and NH(3) from urea (urease route): step 1/1. This is Urease subunit alpha from Paracidovorax citrulli (strain AAC00-1) (Acidovorax citrulli).